Reading from the N-terminus, the 770-residue chain is 3-isopropylmalate dehydratase (770 aa).

Residues Cys-354, Cys-415, and Cys-418 each contribute to the [4Fe-4S] cluster site.

It belongs to the aconitase/IPM isomerase family. As to quaternary structure, monomer. [4Fe-4S] cluster is required as a cofactor.

The enzyme catalyses (2R,3S)-3-isopropylmalate = (2S)-2-isopropylmalate. It functions in the pathway amino-acid biosynthesis; L-leucine biosynthesis; L-leucine from 3-methyl-2-oxobutanoate: step 2/4. In terms of biological role, catalyzes the isomerization between 2-isopropylmalate and 3-isopropylmalate, via the formation of 2-isopropylmaleate. The protein is 3-isopropylmalate dehydratase (LEU1) of Candida maltosa (Yeast).